The sequence spans 461 residues: Argininosuccinate lyase (461 aa).

The protein belongs to the lyase 1 family. Argininosuccinate lyase subfamily.

The protein localises to the cytoplasm. It carries out the reaction 2-(N(omega)-L-arginino)succinate = fumarate + L-arginine. The protein operates within amino-acid biosynthesis; L-arginine biosynthesis; L-arginine from L-ornithine and carbamoyl phosphate: step 3/3. The sequence is that of Argininosuccinate lyase from Streptococcus thermophilus (strain CNRZ 1066).